The primary structure comprises 120 residues: Lysozyme (120 aa).

The C-type lysozyme domain maps to 1–120 (KRFTRCGLVN…NHSNPDISSC (120 aa)). Disulfide bonds link Cys6–Cys120, Cys27–Cys110, Cys62–Cys76, and Cys72–Cys90. Residues Glu32 and Asp50 contribute to the active site.

Belongs to the glycosyl hydrolase 22 family. As to quaternary structure, monomer.

It catalyses the reaction Hydrolysis of (1-&gt;4)-beta-linkages between N-acetylmuramic acid and N-acetyl-D-glucosamine residues in a peptidoglycan and between N-acetyl-D-glucosamine residues in chitodextrins.. Its function is as follows. Lysozymes have primarily a bacteriolytic function; those in tissues and body fluids are associated with the monocyte-macrophage system and enhance the activity of immunoagents. The protein is Lysozyme of Antheraea mylitta (Tasar silkworm).